The sequence spans 288 residues: Diaminopimelate epimerase (288 aa).

Substrate contacts are provided by N13, Q46, and N66. The active-site Proton donor is C75. Residues 76–77, N166, N199, and 217–218 contribute to the substrate site; these read GN and ER. Residue C226 is the Proton acceptor of the active site. Position 227 to 228 (227 to 228) interacts with substrate; it reads GT.

This sequence belongs to the diaminopimelate epimerase family. Homodimer.

The protein localises to the cytoplasm. The catalysed reaction is (2S,6S)-2,6-diaminopimelate = meso-2,6-diaminopimelate. It participates in amino-acid biosynthesis; L-lysine biosynthesis via DAP pathway; DL-2,6-diaminopimelate from LL-2,6-diaminopimelate: step 1/1. Catalyzes the stereoinversion of LL-2,6-diaminopimelate (L,L-DAP) to meso-diaminopimelate (meso-DAP), a precursor of L-lysine and an essential component of the bacterial peptidoglycan. The chain is Diaminopimelate epimerase from Cupriavidus metallidurans (strain ATCC 43123 / DSM 2839 / NBRC 102507 / CH34) (Ralstonia metallidurans).